The sequence spans 526 residues: MATKTDDFAPFPVKDQLPGVEFCVSSSPNWPEGIVLGFQHYIVMLGTTVIIPSILVPLMGGGDVEKAEVINTVLFVSGINTLLQSLFGSRLPVVMGASYAYLIPALYITFSYRFTYYLHPHLRFEETMRAIQGALIIASISHMIMGFFGLWRILVRFLSPLSAAPLVILTGVGLLAFAFPQLARCIEIGLPALIILIILSQYLPHLFKCKRSICEQFAVLFTIAIVWAYAEILTAAGAYDKRPDNTQLSCRTDRSGLISASPWVRIPYPLQWGRPSFHGSDAFAMMAATYVAIVETTGSFIAASRFGSATHIPPSVLSRGIGWQGIGVLLNGLFGTATGSTALVENTGLLGLTKVGSRRVVQISAGFMIFFSIFGKFGAVLASIPLPIFAALYCVLFAYVASAGLGLLQFCNLNSFRNKFILGFSIFIGLSVAQYFTEYLFISGRGPVHTRTSAFNVIMQVIFSSAATVGIMAAFLLDCTHSYGHASVRRDSGRHWWEKFRVYHTDTRTEEFYALPYNLNRFFPSF.

The next 12 membrane-spanning stretches (helical) occupy residues 42-62, 69-89, 91-111, 131-151, 157-177, 186-206, 217-237, 282-302, 359-381, 388-410, 420-440, and 457-477; these read IVML…MGGG, VINT…LFGS, LPVV…ITFS, IQGA…FGLW, FLSP…LLAF, IEIG…LPHL, FAVL…TAAG, AFAM…SFIA, RVVQ…GAVL, IFAA…LLQF, FILG…TEYL, and VIMQ…AFLL.

This sequence belongs to the nucleobase:cation symporter-2 (NCS2) (TC 2.A.40) family. Highly expressed in the root central cylinder. Expressed in the filaments and stigmatic papillae of pollinated flowers and developing siliques.

It is found in the membrane. The protein is Nucleobase-ascorbate transporter 4 (NAT4) of Arabidopsis thaliana (Mouse-ear cress).